The following is a 296-amino-acid chain: m7GpppN-mRNA hydrolase NUDT17 (296 aa).

The Nudix hydrolase domain maps to 90 to 236 (GRGVDVGVAV…DSGSPCGPLP (147 aa)). The short motif at 129 to 150 (GHVELGEQLLEAGLRELQEETG) is the Nudix box element. Mg(2+) contacts are provided by Glu144 and Glu148.

It belongs to the Nudix hydrolase family. It depends on Mg(2+) as a cofactor. The cofactor is Mn(2+).

The catalysed reaction is a 5'-end (N(7)-methyl 5'-triphosphoguanosine)-ribonucleoside in mRNA + H2O = N(7)-methyl-GDP + a 5'-end phospho-ribonucleoside in mRNA + 2 H(+). Functionally, acts as a decapping enzyme capable of hydrolyzing monomethylated capped RNAs (in vitro). Hydrolyzes monomethylated capped RNA after alpha and beta phosphates to form N(7)-methyl-GDP. Shows low activity towards unmethylated capped RNA. The protein is m7GpppN-mRNA hydrolase NUDT17 (nudt17) of Xenopus laevis (African clawed frog).